The chain runs to 291 residues: Acetyl-coenzyme A carboxylase carboxyl transferase subunit beta (291 aa).

Positions 29 to 291 (IMTKCPQCKK…TGGEREWLEN (263 aa)) constitute a CoA carboxyltransferase N-terminal domain. Positions 33, 36, 52, and 55 each coordinate Zn(2+). The C4-type zinc finger occupies 33–55 (CPQCKKIMLTKELDKNLRVCMNC).

Belongs to the AccD/PCCB family. In terms of assembly, acetyl-CoA carboxylase is a heterohexamer composed of biotin carboxyl carrier protein (AccB), biotin carboxylase (AccC) and two subunits each of ACCase subunit alpha (AccA) and ACCase subunit beta (AccD). It depends on Zn(2+) as a cofactor.

It is found in the cytoplasm. The catalysed reaction is N(6)-carboxybiotinyl-L-lysyl-[protein] + acetyl-CoA = N(6)-biotinyl-L-lysyl-[protein] + malonyl-CoA. It functions in the pathway lipid metabolism; malonyl-CoA biosynthesis; malonyl-CoA from acetyl-CoA: step 1/1. Component of the acetyl coenzyme A carboxylase (ACC) complex. Biotin carboxylase (BC) catalyzes the carboxylation of biotin on its carrier protein (BCCP) and then the CO(2) group is transferred by the transcarboxylase to acetyl-CoA to form malonyl-CoA. The sequence is that of Acetyl-coenzyme A carboxylase carboxyl transferase subunit beta from Bacillus pumilus (strain SAFR-032).